The chain runs to 127 residues: MAYRKLGRTSSQRKAMLRDLTTDLLINGRITTTEARAKEVRKTTDKMITLGKRGDLNARRQAATFVRNEVADVIEDGDDVKVQSALQKLFDDVAPRFAERNGGYTRILKTVQRRGDAAQLVILELVD.

It belongs to the bacterial ribosomal protein bL17 family. As to quaternary structure, part of the 50S ribosomal subunit. Contacts protein L32.

In Leuconostoc mesenteroides subsp. mesenteroides (strain ATCC 8293 / DSM 20343 / BCRC 11652 / CCM 1803 / JCM 6124 / NCDO 523 / NBRC 100496 / NCIMB 8023 / NCTC 12954 / NRRL B-1118 / 37Y), this protein is Large ribosomal subunit protein bL17.